Reading from the N-terminus, the 102-residue chain is Large ribosomal subunit protein bL21 (102 aa).

The protein belongs to the bacterial ribosomal protein bL21 family. As to quaternary structure, part of the 50S ribosomal subunit. Contacts protein L20.

Its function is as follows. This protein binds to 23S rRNA in the presence of protein L20. This chain is Large ribosomal subunit protein bL21, found in Phytoplasma australiense.